Here is a 238-residue protein sequence, read N- to C-terminus: Ribosomal RNA small subunit methyltransferase G (238 aa).

S-adenosyl-L-methionine-binding positions include glycine 77, phenylalanine 82, 128–129, and arginine 147; that span reads AE.

The protein belongs to the methyltransferase superfamily. RNA methyltransferase RsmG family.

It localises to the cytoplasm. Its function is as follows. Specifically methylates the N7 position of guanine in position 535 of 16S rRNA. This Geobacillus sp. (strain WCH70) protein is Ribosomal RNA small subunit methyltransferase G.